The primary structure comprises 326 residues: Flap endonuclease 1 (326 aa).

Residues 1-100 (MGNAALRQLA…EEVQERRVAR (100 aa)) form an N-domain region. Residues Asp-28, Asp-82, Glu-154, Glu-156, Asp-175, Asp-177, and Asp-225 each coordinate Mg(2+). Residues 118–246 (AASRLEARTQ…TAISAINDHG (129 aa)) are I-domain. Residues 318-326 (VQTGLDEWI) are interaction with PCNA.

It belongs to the XPG/RAD2 endonuclease family. FEN1 subfamily. As to quaternary structure, interacts with PCNA. PCNA stimulates the nuclease activity without altering cleavage specificity. Mg(2+) is required as a cofactor.

In terms of biological role, structure-specific nuclease with 5'-flap endonuclease and 5'-3' exonuclease activities involved in DNA replication and repair. During DNA replication, cleaves the 5'-overhanging flap structure that is generated by displacement synthesis when DNA polymerase encounters the 5'-end of a downstream Okazaki fragment. Binds the unpaired 3'-DNA end and kinks the DNA to facilitate 5' cleavage specificity. Cleaves one nucleotide into the double-stranded DNA from the junction in flap DNA, leaving a nick for ligation. Also involved in the base excision repair (BER) pathway. Acts as a genome stabilization factor that prevents flaps from equilibrating into structures that lead to duplications and deletions. Also possesses 5'-3' exonuclease activity on nicked or gapped double-stranded DNA. The sequence is that of Flap endonuclease 1 from Haloquadratum walsbyi (strain DSM 16790 / HBSQ001).